Here is a 402-residue protein sequence, read N- to C-terminus: Propionate kinase (402 aa).

2 residues coordinate ATP: N11 and K18. N11 serves as a coordination point for Mg(2+). R86 is a substrate binding site. The Proton donor/acceptor role is filled by D143. Residues H175, 203–207, 278–280, and 326–330 contribute to the ATP site; these read HLGNG, DLR, and GIGEN.

The protein belongs to the acetokinase family. TdcD subfamily. In terms of assembly, homodimer. The cofactor is Mg(2+).

The enzyme catalyses propanoate + ATP = propanoyl phosphate + ADP. It functions in the pathway amino-acid degradation; L-threonine degradation via propanoate pathway; propanoate from L-threonine: step 4/4. Catalyzes the conversion of propionyl phosphate and ADP to propionate and ATP. The protein is Propionate kinase of Edwardsiella piscicida.